The chain runs to 339 residues: Heat-inducible transcription repressor HrcA (339 aa).

This sequence belongs to the HrcA family.

Functionally, negative regulator of class I heat shock genes (grpE-dnaK-dnaJ and groELS operons). Prevents heat-shock induction of these operons. The chain is Heat-inducible transcription repressor HrcA from Clostridium perfringens (strain 13 / Type A).